Consider the following 198-residue polypeptide: Guanylate kinase (198 aa).

The Guanylate kinase-like domain maps to 4 to 186; sequence PRPVVLSGPS…AYATLKQALS (183 aa). 14 to 19 contributes to the ATP binding site; sequence GAGKST. 37-51 serves as a coordination point for substrate; sequence SHTTRNPRPGEEDGK. Residues R44, R137, and R148 contribute to the active site. 171-172 is an ATP binding site; sequence ND.

This sequence belongs to the guanylate kinase family. As to quaternary structure, monomer. Interacts with RD3. As to expression, widely expressed. In retina is expressed in inner segment, outer nuclear layer, outer plexiform layer, inner plexiform layer, and ganglion cell layer (at protein level).

The protein localises to the photoreceptor inner segment. It localises to the cytoplasm. Its subcellular location is the cytosol. The protein resides in the mitochondrion. The catalysed reaction is GMP + ATP = GDP + ADP. Its function is as follows. Catalyzes the phosphorylation of GMP to GDP. Essential enzyme for recycling GMP and indirectly, cyclic GMP (cGMP). Involved in the cGMP metabolism in photoreceptors. The polypeptide is Guanylate kinase (Mus musculus (Mouse)).